The sequence spans 252 residues: Hydroxyacylglutathione hydrolase (252 aa).

7 residues coordinate Zn(2+): His-54, His-56, Asp-58, His-59, His-111, Asp-128, and His-166.

It belongs to the metallo-beta-lactamase superfamily. Glyoxalase II family. In terms of assembly, monomer. Zn(2+) serves as cofactor.

The enzyme catalyses an S-(2-hydroxyacyl)glutathione + H2O = a 2-hydroxy carboxylate + glutathione + H(+). Its pathway is secondary metabolite metabolism; methylglyoxal degradation; (R)-lactate from methylglyoxal: step 2/2. Functionally, thiolesterase that catalyzes the hydrolysis of S-D-lactoyl-glutathione to form glutathione and D-lactic acid. In Photobacterium profundum (strain SS9), this protein is Hydroxyacylglutathione hydrolase.